Here is a 124-residue protein sequence, read N- to C-terminus: MDQDREQGSALDPRYDAAGLVTAVVTDHRSGEVLMLAHMNAEALAATLESGEATFFSRSRGRLWKKGESSGNVMRVVEARIDCDQDAIWLRCEPAGPACHTGERSCFYRRIDRDGPTLVRTIEV.

Position 82 (aspartate 82) interacts with Mg(2+). A Zn(2+)-binding site is contributed by cysteine 83. Mg(2+) is bound by residues aspartate 84 and aspartate 86. The Zn(2+) site is built by cysteine 99 and cysteine 106.

The protein belongs to the PRA-CH family. In terms of assembly, homodimer. It depends on Mg(2+) as a cofactor. Requires Zn(2+) as cofactor.

The protein resides in the cytoplasm. It carries out the reaction 1-(5-phospho-beta-D-ribosyl)-5'-AMP + H2O = 1-(5-phospho-beta-D-ribosyl)-5-[(5-phospho-beta-D-ribosylamino)methylideneamino]imidazole-4-carboxamide. It functions in the pathway amino-acid biosynthesis; L-histidine biosynthesis; L-histidine from 5-phospho-alpha-D-ribose 1-diphosphate: step 3/9. In terms of biological role, catalyzes the hydrolysis of the adenine ring of phosphoribosyl-AMP. The protein is Phosphoribosyl-AMP cyclohydrolase of Rhizorhabdus wittichii (strain DSM 6014 / CCUG 31198 / JCM 15750 / NBRC 105917 / EY 4224 / RW1) (Sphingomonas wittichii).